The primary structure comprises 410 residues: Platelet-activating factor acetylhydrolase IB subunit beta (410 aa).

A required for self-association and interaction with PAFAH1B2 and PAFAH1B3 region spans residues 1 to 38 (MVLSQRQRDELNRAIADYLRSNGYEEAYSVFKKEAELD). The segment at 1-66 (MVLSQRQRDE…SVIRLQKKVM (66 aa)) is interaction with NDE1. Residues 1 to 102 (MVLSQRQRDE…EWIPRPPEKY (102 aa)) are interaction with NDEL1. Residues 7–39 (QRDELNRAIADYLRSNGYEEAYSVFKKEAELDM) enclose the LisH domain. Residue K53 is modified to N6-acetyllysine. Residues 56-82 (TSVIRLQKKVMELESKLNEAKEEFTSG) are a coiled coil. The segment at 83 to 410 (GPLGQKRDPK…DQTVKVWECR (328 aa)) is interaction with dynein and dynactin. WD repeat units lie at residues 106–147 (GHRS…RTLK), 148–187 (GHTDSVQDISFDHSGKLLASCSADMTIKLWDFQGFECIRT), 190–229 (GHDHNVSSVAIMPNGDHIVSASRDKTIKMWEVQTGYCVKT), 232–271 (GHREWVRMVRPNQDGTLIASCSNDQTVRVWVVATKECKAE), 274–333 (EHEH…CLMT), 336–377 (GHDN…KTLN), and 378–410 (AHEHFVTSLDFHKTAPYVVTGSVDQTVKVWECR). S109 bears the Phosphoserine mark. The interval 367-409 (YKNKRCMKTLNAHEHFVTSLDFHKTAPYVVTGSVDQTVKVWEC) is interaction with DCX. Positions 388–410 (FHKTAPYVVTGSVDQTVKVWECR) are interaction with NDEL1.

It belongs to the WD repeat LIS1/nudF family. As to quaternary structure, can self-associate. Component of the cytosolic PAF-AH (I) heterotetrameric enzyme, which is composed of PAFAH1B1 (beta), PAFAH1B2 (alpha2) and PAFAH1B3 (alpha1) subunits. The catalytic activity of the enzyme resides in the alpha1 (PAFAH1B3) and alpha2 (PAFAH1B2) subunits, whereas the beta subunit (PAFAH1B1) has regulatory activity. Trimer formation is not essential for the catalytic activity. Interacts with the catalytic dimer of PAF-AH (I) heterotetrameric enzyme: interacts with PAFAH1B2 homodimer (alpha2/alpha2 homodimer), PAFAH1B3 homodimer (alpha1/alpha1 homodimer) and PAFAH1B2-PAFAH1B3 heterodimer (alpha2/alpha1 heterodimer). Interacts with DCX, dynein, dynactin, IQGAP1, KATNB1, NDE1, NDEL1, NUDC and RSN. Interacts with DISC1, and this interaction is enhanced by NDEL1. Interacts with DAB1 when DAB1 is phosphorylated in response to RELN/reelin signaling. Interacts with INTS13. Interacts with DCDC1.

It localises to the cytoplasm. It is found in the cytoskeleton. The protein localises to the microtubule organizing center. The protein resides in the centrosome. Its subcellular location is the spindle. It localises to the nucleus membrane. Functionally, regulatory subunit (beta subunit) of the cytosolic type I platelet-activating factor (PAF) acetylhydrolase (PAF-AH (I)), an enzyme that catalyzes the hydrolyze of the acetyl group at the sn-2 position of PAF and its analogs and participates in PAF inactivation. Regulates the PAF-AH (I) activity in a catalytic dimer composition-dependent manner. Positively regulates the activity of the minus-end directed microtubule motor protein dynein. May enhance dynein-mediated microtubule sliding by targeting dynein to the microtubule plus end. Required for several dynein- and microtubule-dependent processes such as the maintenance of Golgi integrity, the peripheral transport of microtubule fragments and the coupling of the nucleus and centrosome. Required during brain development for the proliferation of neuronal precursors and the migration of newly formed neurons from the ventricular/subventricular zone toward the cortical plate. Neuronal migration involves a process called nucleokinesis, whereby migrating cells extend an anterior process into which the nucleus subsequently translocates. During nucleokinesis dynein at the nuclear surface may translocate the nucleus towards the centrosome by exerting force on centrosomal microtubules. Also required for proper activation of Rho GTPases and actin polymerization at the leading edge of locomoting cerebellar neurons and postmigratory hippocampal neurons in response to calcium influx triggered via NMDA receptors. May also play a role in other forms of cell locomotion including the migration of fibroblasts during wound healing. Required for dynein recruitment to microtubule plus ends and BICD2-bound cargos. May modulate the Reelin pathway through interaction of the PAF-AH (I) catalytic dimer with VLDLR. This is Platelet-activating factor acetylhydrolase IB subunit beta from Felis catus (Cat).